A 1409-amino-acid polypeptide reads, in one-letter code: DNA-directed RNA polymerase subunit beta' (1409 aa).

4 residues coordinate Zn(2+): cysteine 70, cysteine 72, cysteine 85, and cysteine 88. Mg(2+) is bound by residues aspartate 461, aspartate 463, and aspartate 465. Cysteine 820, cysteine 894, cysteine 901, and cysteine 904 together coordinate Zn(2+).

This sequence belongs to the RNA polymerase beta' chain family. As to quaternary structure, the RNAP catalytic core consists of 2 alpha, 1 beta, 1 beta' and 1 omega subunit. When a sigma factor is associated with the core the holoenzyme is formed, which can initiate transcription. Mg(2+) serves as cofactor. The cofactor is Zn(2+).

The catalysed reaction is RNA(n) + a ribonucleoside 5'-triphosphate = RNA(n+1) + diphosphate. Its function is as follows. DNA-dependent RNA polymerase catalyzes the transcription of DNA into RNA using the four ribonucleoside triphosphates as substrates. This Ralstonia nicotianae (strain ATCC BAA-1114 / GMI1000) (Ralstonia solanacearum) protein is DNA-directed RNA polymerase subunit beta'.